The primary structure comprises 39 residues: Protein YkiC (39 aa).

The chain crosses the membrane as a helical span at residues 13–35 (LLSAKLCNCTQAIMTHIIASFLA).

It is found in the cell inner membrane. This chain is Protein YkiC, found in Escherichia coli (strain K12).